Here is a 904-residue protein sequence, read N- to C-terminus: Translation initiation factor IF-2 (904 aa).

Disordered regions lie at residues 103–122, 137–252, and 267–315; these read YVKS…PDEE, NLEE…MVAG, and HLSA…FERP. The segment covering 137–177 has biased composition (basic and acidic residues); that stretch reads NLEEQQRLAESDRVRDEAIQRKREEEQAAKDRAEAERKAAE. 2 stretches are compositionally biased toward low complexity: residues 178–230 and 280–293; these read EAAA…AAPA and RGKP…SSSR. Positions 403–572 constitute a tr-type G domain; it reads SRPPVVTIMG…SLQAEVLELK (170 aa). Residues 412 to 419 form a G1 region; sequence GHVDHGKT. GTP is bound at residue 412–419; it reads GHVDHGKT. The G2 stretch occupies residues 437–441; it reads GITQH. The tract at residues 458 to 461 is G3; that stretch reads DTPG. GTP contacts are provided by residues 458 to 462 and 512 to 515; these read DTPGH and NKID. A G4 region spans residues 512 to 515; that stretch reads NKID. The G5 stretch occupies residues 548 to 550; sequence SAK.

This sequence belongs to the TRAFAC class translation factor GTPase superfamily. Classic translation factor GTPase family. IF-2 subfamily.

The protein resides in the cytoplasm. Functionally, one of the essential components for the initiation of protein synthesis. Protects formylmethionyl-tRNA from spontaneous hydrolysis and promotes its binding to the 30S ribosomal subunits. Also involved in the hydrolysis of GTP during the formation of the 70S ribosomal complex. The chain is Translation initiation factor IF-2 from Xanthomonas euvesicatoria pv. vesicatoria (strain 85-10) (Xanthomonas campestris pv. vesicatoria).